The following is a 353-amino-acid chain: Photosystem II protein D1 (353 aa).

At Thr-2 the chain carries N-acetylthreonine. Thr-2 bears the Phosphothreonine mark. Helical transmembrane passes span 29–46, 118–133, and 142–156; these read YIGW…TATS, HFLL…EWEL, and WIAV…AATA. His-118 is a binding site for chlorophyll a. Tyr-126 is a pheophytin a binding site. [CaMn4O5] cluster-binding residues include Asp-170 and Glu-189. The helical transmembrane segment at 197-218 threads the bilayer; it reads FHMLGVAGVFGGSLFSAMHGSL. Residue His-198 coordinates chlorophyll a. Residues His-215 and 264-265 each bind a quinone; that span reads SF. A Fe cation-binding site is contributed by His-215. His-272 is a Fe cation binding site. Residues 274–288 form a helical membrane-spanning segment; sequence FLAAWPVAGIWFTAL. His-332, Glu-333, Asp-342, and Ala-344 together coordinate [CaMn4O5] cluster. Positions 345-353 are excised as a propeptide; the sequence is AVESISIGG.

It belongs to the reaction center PufL/M/PsbA/D family. In terms of assembly, PSII is composed of 1 copy each of membrane proteins PsbA, PsbB, PsbC, PsbD, PsbE, PsbF, PsbH, PsbI, PsbJ, PsbK, PsbL, PsbM, PsbT, PsbX, PsbY, PsbZ, Psb30/Ycf12, at least 3 peripheral proteins of the oxygen-evolving complex and a large number of cofactors. It forms dimeric complexes. It depends on The D1/D2 heterodimer binds P680, chlorophylls that are the primary electron donor of PSII, and subsequent electron acceptors. It shares a non-heme iron and each subunit binds pheophytin, quinone, additional chlorophylls, carotenoids and lipids. D1 provides most of the ligands for the Mn4-Ca-O5 cluster of the oxygen-evolving complex (OEC). There is also a Cl(-1) ion associated with D1 and D2, which is required for oxygen evolution. The PSII complex binds additional chlorophylls, carotenoids and specific lipids. as a cofactor. Tyr-161 forms a radical intermediate that is referred to as redox-active TyrZ, YZ or Y-Z. In terms of processing, C-terminally processed by CTPA; processing is essential to allow assembly of the oxygen-evolving complex and thus photosynthetic growth.

The protein localises to the plastid. It is found in the chloroplast thylakoid membrane. It carries out the reaction 2 a plastoquinone + 4 hnu + 2 H2O = 2 a plastoquinol + O2. Photosystem II (PSII) is a light-driven water:plastoquinone oxidoreductase that uses light energy to abstract electrons from H(2)O, generating O(2) and a proton gradient subsequently used for ATP formation. It consists of a core antenna complex that captures photons, and an electron transfer chain that converts photonic excitation into a charge separation. The D1/D2 (PsbA/PsbD) reaction center heterodimer binds P680, the primary electron donor of PSII as well as several subsequent electron acceptors. The polypeptide is Photosystem II protein D1 (Pinus contorta (Shore pine)).